We begin with the raw amino-acid sequence, 414 residues long: TAR DNA-binding protein 43 (414 aa).

RRM domains follow at residues 104–200 and 191–262; these read SDLI…RCTE and RKVF…NAEP. Residues 261–274 show a composition bias toward basic and acidic residues; it reads EPKHNSNRQLERGG. 2 disordered regions span residues 261-303 and 341-373; these read EPKH…GNNQ and ASQQNQSGPSGNNQPQGNMQREQNQGFSSGNNS. A compositionally biased stretch (gly residues) spans 275-303; that stretch reads RFGGNPGGFGNQGGFGNSRGGGGGLGNNQ. Residues 342–373 are compositionally biased toward low complexity; the sequence is SQQNQSGPSGNNQPQGNMQREQNQGFSSGNNS.

In terms of assembly, homodimer.

It is found in the nucleus. The protein localises to the cytoplasm. It localises to the stress granule. The protein resides in the mitochondrion. In terms of biological role, probably involved in transcriptional repression. May play a role in the maintenance of the circadian clock periodicity. The chain is TAR DNA-binding protein 43 (TARDBP) from Gallus gallus (Chicken).